The following is a 225-amino-acid chain: Small ribosomal subunit protein uS3 (225 aa).

In terms of domain architecture, KH type-2 spans 38–106 (LRGHLRKKLS…DVALNIVEIR (69 aa)).

This sequence belongs to the universal ribosomal protein uS3 family. As to quaternary structure, part of the 30S ribosomal subunit. Forms a tight complex with proteins S10 and S14.

In terms of biological role, binds the lower part of the 30S subunit head. Binds mRNA in the 70S ribosome, positioning it for translation. The polypeptide is Small ribosomal subunit protein uS3 (Granulibacter bethesdensis (strain ATCC BAA-1260 / CGDNIH1)).